Consider the following 685-residue polypeptide: tRNA 5-methylaminomethyl-2-thiouridine biosynthesis bifunctional protein MnmC (685 aa).

The interval 1-272 (MTAEPNKPCQ…MAAILSSATQ (272 aa)) is tRNA (mnm(5)s(2)U34)-methyltransferase. An FAD-dependent cmnm(5)s(2)U34 oxidoreductase region spans residues 278–685 (IGGGLASAHL…LRKLLKGKAL (408 aa)).

It in the N-terminal section; belongs to the methyltransferase superfamily. tRNA (mnm(5)s(2)U34)-methyltransferase family. This sequence in the C-terminal section; belongs to the DAO family. It depends on FAD as a cofactor.

The protein resides in the cytoplasm. It catalyses the reaction 5-aminomethyl-2-thiouridine(34) in tRNA + S-adenosyl-L-methionine = 5-methylaminomethyl-2-thiouridine(34) in tRNA + S-adenosyl-L-homocysteine + H(+). Its function is as follows. Catalyzes the last two steps in the biosynthesis of 5-methylaminomethyl-2-thiouridine (mnm(5)s(2)U) at the wobble position (U34) in tRNA. Catalyzes the FAD-dependent demodification of cmnm(5)s(2)U34 to nm(5)s(2)U34, followed by the transfer of a methyl group from S-adenosyl-L-methionine to nm(5)s(2)U34, to form mnm(5)s(2)U34. This Shewanella baltica (strain OS185) protein is tRNA 5-methylaminomethyl-2-thiouridine biosynthesis bifunctional protein MnmC.